Here is a 351-residue protein sequence, read N- to C-terminus: Phenylalanine--tRNA ligase alpha subunit (351 aa).

E276 serves as a coordination point for Mg(2+).

It belongs to the class-II aminoacyl-tRNA synthetase family. Phe-tRNA synthetase alpha subunit type 1 subfamily. In terms of assembly, tetramer of two alpha and two beta subunits. Requires Mg(2+) as cofactor.

Its subcellular location is the cytoplasm. It carries out the reaction tRNA(Phe) + L-phenylalanine + ATP = L-phenylalanyl-tRNA(Phe) + AMP + diphosphate + H(+). The polypeptide is Phenylalanine--tRNA ligase alpha subunit (Psychrobacter arcticus (strain DSM 17307 / VKM B-2377 / 273-4)).